A 185-amino-acid polypeptide reads, in one-letter code: Ribosome-recycling factor (185 aa).

This sequence belongs to the RRF family.

The protein localises to the cytoplasm. In terms of biological role, responsible for the release of ribosomes from messenger RNA at the termination of protein biosynthesis. May increase the efficiency of translation by recycling ribosomes from one round of translation to another. The polypeptide is Ribosome-recycling factor (Ectopseudomonas mendocina (strain ymp) (Pseudomonas mendocina)).